Consider the following 479-residue polypeptide: mRNA export factor ICP27 homolog (479 aa).

Residues 1 to 15 (MVPSQRLSRTSSISS) are compositionally biased toward low complexity. Disordered stretches follow at residues 1 to 77 (MVPS…PSSV) and 91 to 210 (KKWD…NKPW). A compositionally biased stretch (acidic residues) spans 35-44 (TDCDLDPMEG). The tract at residues 61–146 (DEDPTPAHAI…TDESYGKRRH (86 aa)) is nuclear export signal and interaction with host NXF1. Positions 127 to 130 (KRRR) are nuclear localization signal. Residues 132-142 (EVHGCTDESYG) are compositionally biased toward basic and acidic residues. Residues 143-145 (KRR) form a nuclear localization signal region. Residues cysteine 354, histidine 445, cysteine 449, and cysteine 454 each coordinate Zn(2+). The CHC2-type zinc-finger motif lies at 354–454 (CFLPNTRDYN…HTRDCRSASC (101 aa)).

The protein belongs to the HHV-1 ICP27 protein family. In terms of assembly, interacts with host XPO1 and with the XPO1 export pathway components small GTPase RAN and nucleoporin NUP214. Interacts with host SPEN, OTT1 and OTT3. Interacts with host SRSF1, SRSF3, SRSF7 and SRPK1. Interacts with host DHX9; this interaction may have an inhibitory effect on virion production. Interacts (via N-terminus) with host NXF1; this interaction plays a role in mRNA export. In terms of processing, phosphorylated by cellular protein kinase CK2.

It localises to the host nucleus. Its subcellular location is the host cytoplasm. Promotes the nuclear export of a subset of early and late viral mRNAs by interacting with mRNAs and cellular export proteins. Additionally may prevent the establishment of cellular antiviral state, by acting as an alternative splicing factor for cellular RNAs such as STAT1, resulting in a STAT1 mRNA incapable of producing the STAT1alpha isoform. In Homo sapiens (Human), this protein is mRNA export factor ICP27 homolog.